A 502-amino-acid chain; its full sequence is Phenylalanine--tRNA ligase alpha subunit (502 aa).

L-phenylalanine contacts are provided by residues threonine 339, 382–384 (QIE), and tyrosine 422. Glutamate 424 lines the Mg(2+) pocket. Position 448 (phenylalanine 448) interacts with L-phenylalanine.

This sequence belongs to the class-II aminoacyl-tRNA synthetase family. Phe-tRNA synthetase alpha subunit type 2 subfamily. As to quaternary structure, tetramer of two alpha and two beta subunits. Requires Mg(2+) as cofactor.

The protein resides in the cytoplasm. The enzyme catalyses tRNA(Phe) + L-phenylalanine + ATP = L-phenylalanyl-tRNA(Phe) + AMP + diphosphate + H(+). The chain is Phenylalanine--tRNA ligase alpha subunit from Halobacterium salinarum (strain ATCC 29341 / DSM 671 / R1).